Consider the following 907-residue polypeptide: Valine--tRNA ligase (907 aa).

The 'HIGH' region signature appears at 45–55; that stretch reads PNVTGSLHMGH. Positions 554-558 match the 'KMSKS' region motif; the sequence is KMSKS. Lys557 provides a ligand contact to ATP. Positions 838–870 form a coiled coil; that stretch reads GQLIDLEAERARLMKDVSKIEQDIEKLSAKLSN.

It belongs to the class-I aminoacyl-tRNA synthetase family. ValS type 1 subfamily. In terms of assembly, monomer.

It localises to the cytoplasm. The catalysed reaction is tRNA(Val) + L-valine + ATP = L-valyl-tRNA(Val) + AMP + diphosphate. Catalyzes the attachment of valine to tRNA(Val). As ValRS can inadvertently accommodate and process structurally similar amino acids such as threonine, to avoid such errors, it has a 'posttransfer' editing activity that hydrolyzes mischarged Thr-tRNA(Val) in a tRNA-dependent manner. The sequence is that of Valine--tRNA ligase from Bartonella henselae (strain ATCC 49882 / DSM 28221 / CCUG 30454 / Houston 1) (Rochalimaea henselae).